A 563-amino-acid polypeptide reads, in one-letter code: MKLAYWMYAGPAHIGTLRVASSFKNVHAIMHAPLGDDYFNVMRSMLERERDFTPVTTSIVDRHVLARGSQEKVVENITRKDNEESPDLIILTPTCTSSILQEDLQNFVNRASMSENSTSDVLLADVNHYRVNELQAADRTLEQIVRFYLEKEKSTLFRQGVSSVDDNNKTLTNNFLSIKTEKPSANIIGIFTLGFHNQHDCRELKRLLNNLGIEINEVIPEGGSVKNLKNLPKAWFNIIPYREVGLMSAIYLEKEFNMPYVAVSPIGIIDTAVCIREIERILNKIYFESLEGNVNTQSVLTTNPYFNSHINSTNSETRDHNVKPFDFEFYIENQTRFISQAAWFSRSIDCQNLTGKKAVVFGDATHAAGITKILAREMGIKVVCSGTYCKHDADWFREQVFGFCDQILITDDHTQVGDMIAKLEPSAIFGTQMERHIGKRLDIPCGVISAPVHIQNFPLSYRPFLGYEGTNQIADLVYNSFSLGMEDHLLEIFSGHDTKEPITKSLSTENELNWDAEALKELSNVPGFVRGKVKRNTEKYARQNAIPSITLDVLFAAKEALSA.

Asp36 contacts [4Fe-4S] cluster. Residue Asp349 is the Proton donor of the active site. 484–485 (GM) serves as a coordination point for substrate.

It belongs to the ChlB/BchB/BchZ family. As to quaternary structure, protochlorophyllide reductase is composed of three subunits; ChlL, ChlN and ChlB. Forms a heterotetramer of two ChlB and two ChlN subunits. It depends on [4Fe-4S] cluster as a cofactor.

The protein resides in the plastid. It is found in the chloroplast. The enzyme catalyses chlorophyllide a + oxidized 2[4Fe-4S]-[ferredoxin] + 2 ADP + 2 phosphate = protochlorophyllide a + reduced 2[4Fe-4S]-[ferredoxin] + 2 ATP + 2 H2O. It participates in porphyrin-containing compound metabolism; chlorophyll biosynthesis (light-independent). Component of the dark-operative protochlorophyllide reductase (DPOR) that uses Mg-ATP and reduced ferredoxin to reduce ring D of protochlorophyllide (Pchlide) to form chlorophyllide a (Chlide). This reaction is light-independent. The NB-protein (ChlN-ChlB) is the catalytic component of the complex. The chain is Light-independent protochlorophyllide reductase subunit B from Chlamydomonas moewusii (Chlamydomonas eugametos).